Consider the following 493-residue polypeptide: Beta-hexosaminidase Amuc_2018 (493 aa).

The first 21 residues, Met-1–Ala-21, serve as a signal peptide directing secretion. Substrate is bound at residue Arg-122. Residues Asp-151 and His-214 each act as charge relay system in the active site. Residues Cys-227 and Cys-247 each coordinate Zn(2+). Asp-278 contacts substrate. Residue Glu-279 is the Charge relay system of the active site. Residues Cys-288 and Cys-291 each contribute to the Zn(2+) site. Substrate is bound by residues Trp-345, Tyr-373–Asp-375, and Trp-421–Glu-423.

The protein belongs to the glycosyl hydrolase 20 family.

It carries out the reaction Hydrolysis of terminal non-reducing N-acetyl-D-hexosamine residues in N-acetyl-beta-D-hexosaminides.. Significantly inhibited by the addition of sodium dodecyl sulfate (SDS), but not by EDTA, urea, 2-mercaptoethanol or Triton X-100. Strongly inhibited by Cu2(+) ions, in case of which the activity is decreased by 70%. No significant inhibition with Al(3+), Fe(3+), Ca(2+), Cd(2+), Mg(2+), Mn(2+), Ni(2+) and Zn(2+) ions. Strongly inhibited by PugNAc (O-(2-acetamido-2-deoxy-D-glucopyranosylideneamino) N-phenylcarbamate) in the sub-micromolar concentration range. PugNAc at a concentration of 0.5 mM decreases the activity by 50% and the addition of 1 mM PugNAc fully inhibits the enzyme. No significant reduction in the activity by alkylation using N-ethylmaleimide or 2-iodoacetamide. In terms of biological role, hydrolyzes terminal GlcNAc residues from terminally unbranched N-glycans and from chitobiose. Hydrolyzes beta-1,6-linked N-acetylglucosamine and beta-1,4-linked N-acetylgalactosamine from pNP-alpha-GalNAc[beta1,3Gal]beta1,6GlcNAc and pNP-beta-GlcNAc-beta1,4-GalNAc substrates, respectively, as well as beta-1,2-linked N-acetylglucosamine units from the non-reducing end of N-glycans. Hydrolyzes GlcNAc residues linked to alpha1,3- or alpha1,6-mannose branch, but has low activity on substrates with more than one GlcNAc residue on one of the mannose branches. Releases terminal GlcNAc moieties from the N-glycopeptide Gly-Glu-Asn-(GlcNAc2Man3GlcNAc2)-Arg with high efficiency. Has moderate hydrolytic activity on the chitobiose moiety of N-glycopeptide substrate Gly-Glu-Asn-(GlcNAc2)-Arg. Does not hydrolyze GlcNAc residues from N-glycan structures bearing a bisecting GlcNAc moiety (beta1,4-linked GlcNAc to the beta1,4-linked core mannose). Potentially capable of cleaving the specific glycoside linkages in the process of mucin degradation in human intestinal tract. Hydrolyzes synthetic substrate pNP-beta-GlcNAc with high activity and pNP-beta-GalNAc to a lesser extent. Does not hydrolyze pNP-beta-glucose, pNP-beta-galactose, pNP-alpha-glucose, pNP-alpha-galactose, pNP-alpha-GlcNAc or pNP-alpha-fucose. The sequence is that of Beta-hexosaminidase Amuc_2018 from Akkermansia muciniphila (strain ATCC BAA-835 / DSM 22959 / JCM 33894 / BCRC 81048 / CCUG 64013 / CIP 107961 / Muc).